The following is a 482-amino-acid chain: Alanine aminotransferase 2 (482 aa).

Lysine 299 carries the post-translational modification N6-(pyridoxal phosphate)lysine.

Belongs to the class-I pyridoxal-phosphate-dependent aminotransferase family. Alanine aminotransferase subfamily. In terms of assembly, homodimer. Pyridoxal 5'-phosphate is required as a cofactor. The N-terminus is blocked. In terms of tissue distribution, mesophyll and bundle sheath cells.

The enzyme catalyses L-alanine + 2-oxoglutarate = pyruvate + L-glutamate. Its pathway is photosynthesis; C4 acid pathway. It participates in amino-acid degradation; L-alanine degradation via transaminase pathway; pyruvate from L-alanine: step 1/1. Transfer of C3 units between the cytosol of mesophyll and bundle sheath cells to maintain a nitrogen-carbon balance in the C4-dicarboxylic pathway. The sequence is that of Alanine aminotransferase 2 from Panicum miliaceum (Proso millet).